Reading from the N-terminus, the 599-residue chain is Elongation factor 4 (599 aa).

The tr-type G domain occupies 4–186 (ENIRNFSIIA…EIVKKIPPPE (183 aa)). GTP-binding positions include 16–21 (DHGKST) and 133–136 (NKID).

It belongs to the TRAFAC class translation factor GTPase superfamily. Classic translation factor GTPase family. LepA subfamily.

Its subcellular location is the cell inner membrane. The catalysed reaction is GTP + H2O = GDP + phosphate + H(+). In terms of biological role, required for accurate and efficient protein synthesis under certain stress conditions. May act as a fidelity factor of the translation reaction, by catalyzing a one-codon backward translocation of tRNAs on improperly translocated ribosomes. Back-translocation proceeds from a post-translocation (POST) complex to a pre-translocation (PRE) complex, thus giving elongation factor G a second chance to translocate the tRNAs correctly. Binds to ribosomes in a GTP-dependent manner. The polypeptide is Elongation factor 4 (Geobacter metallireducens (strain ATCC 53774 / DSM 7210 / GS-15)).